A 530-amino-acid chain; its full sequence is UPF0422 protein lpl2888 (530 aa).

Residues 1-19 form the signal peptide; sequence MKFKKIILALACLSSPLYA. A coiled-coil region spans residues 20–66; sequence DQDQQLKSEIQRLQHQAEDLQAQLNRLQKQLANHKSSQQKHEQQAAT. The tract at residues 50–81 is disordered; that stretch reads LANHKSSQQKHEQQAATKPAEPQSKPTVKSGA.

It belongs to the UPF0422 family.

The protein is UPF0422 protein lpl2888 of Legionella pneumophila (strain Lens).